A 418-amino-acid chain; its full sequence is Tyrosine--tRNA ligase (418 aa).

Tyr-34 contributes to the L-tyrosine binding site. Positions Pro-39 to His-48 match the 'HIGH' region motif. L-tyrosine-binding residues include Tyr-169 and Gln-173. The 'KMSKS' region motif lies at Lys-229 to Ser-233. Lys-232 provides a ligand contact to ATP. In terms of domain architecture, S4 RNA-binding spans Leu-352–Tyr-418.

The protein belongs to the class-I aminoacyl-tRNA synthetase family. TyrS type 1 subfamily. As to quaternary structure, homodimer.

The protein resides in the cytoplasm. The catalysed reaction is tRNA(Tyr) + L-tyrosine + ATP = L-tyrosyl-tRNA(Tyr) + AMP + diphosphate + H(+). Functionally, catalyzes the attachment of tyrosine to tRNA(Tyr) in a two-step reaction: tyrosine is first activated by ATP to form Tyr-AMP and then transferred to the acceptor end of tRNA(Tyr). This chain is Tyrosine--tRNA ligase, found in Streptococcus pyogenes serotype M28 (strain MGAS6180).